A 312-amino-acid polypeptide reads, in one-letter code: tRNA dimethylallyltransferase (312 aa).

Position 11–18 (11–18) interacts with ATP; that stretch reads GPTAAGKS. Residue 13–18 coordinates substrate; that stretch reads TAAGKS. Interaction with substrate tRNA regions lie at residues 36–39, 160–164, and 243–248; these read DSAT, QRIQR, and RCVGYR.

Belongs to the IPP transferase family. In terms of assembly, monomer. The cofactor is Mg(2+).

The catalysed reaction is adenosine(37) in tRNA + dimethylallyl diphosphate = N(6)-dimethylallyladenosine(37) in tRNA + diphosphate. Its function is as follows. Catalyzes the transfer of a dimethylallyl group onto the adenine at position 37 in tRNAs that read codons beginning with uridine, leading to the formation of N6-(dimethylallyl)adenosine (i(6)A). The sequence is that of tRNA dimethylallyltransferase from Bordetella avium (strain 197N).